A 191-amino-acid chain; its full sequence is Large ribosomal subunit protein uL5 (191 aa).

The protein belongs to the universal ribosomal protein uL5 family. In terms of assembly, part of the 50S ribosomal subunit; part of the 5S rRNA/L5/L18/L25 subcomplex. Contacts the 5S rRNA and the P site tRNA. Forms a bridge to the 30S subunit in the 70S ribosome.

Its function is as follows. This is one of the proteins that bind and probably mediate the attachment of the 5S RNA into the large ribosomal subunit, where it forms part of the central protuberance. In the 70S ribosome it contacts protein S13 of the 30S subunit (bridge B1b), connecting the 2 subunits; this bridge is implicated in subunit movement. Contacts the P site tRNA; the 5S rRNA and some of its associated proteins might help stabilize positioning of ribosome-bound tRNAs. This is Large ribosomal subunit protein uL5 from Thermobifida fusca (strain YX).